Consider the following 247-residue polypeptide: Ribonuclease 3 (247 aa).

The region spanning 21–149 (FKKLSKKIGI…LVGAIYLDRG (129 aa)) is the RNase III domain. Glu62 contacts Mg(2+). Residue Asp66 is part of the active site. Residues Asn135 and Glu138 each contribute to the Mg(2+) site. Glu138 is a catalytic residue. The DRBM domain maps to 176–245 (DYKTQLQEYS…AKELYIRIRR (70 aa)).

Belongs to the ribonuclease III family. As to quaternary structure, homodimer. The cofactor is Mg(2+).

The protein localises to the cytoplasm. It catalyses the reaction Endonucleolytic cleavage to 5'-phosphomonoester.. Its function is as follows. Digests double-stranded RNA. Involved in the processing of primary rRNA transcript to yield the immediate precursors to the large and small rRNAs (23S and 16S). Processes some mRNAs, and tRNAs when they are encoded in the rRNA operon. Processes pre-crRNA and tracrRNA of type II CRISPR loci if present in the organism. The protein is Ribonuclease 3 of Leptospira borgpetersenii serovar Hardjo-bovis (strain L550).